Consider the following 409-residue polypeptide: Peptidase T (409 aa).

His78 contributes to the Zn(2+) binding site. Asp80 is an active-site residue. Asp140 contacts Zn(2+). The active-site Proton acceptor is Glu174. The Zn(2+) site is built by Glu175, Asp197, and His379.

The protein belongs to the peptidase M20B family. Requires Zn(2+) as cofactor.

The protein localises to the cytoplasm. It carries out the reaction Release of the N-terminal residue from a tripeptide.. Cleaves the N-terminal amino acid of tripeptides. This Photobacterium profundum (strain SS9) protein is Peptidase T.